The following is a 188-amino-acid chain: dCTP deaminase (188 aa).

DCTP-binding positions include 111–116 (KSTYAR), 135–137 (VLE), Gln156, Tyr170, and Gln180. Catalysis depends on Glu137, which acts as the Proton donor/acceptor.

This sequence belongs to the dCTP deaminase family. As to quaternary structure, homotrimer.

The catalysed reaction is dCTP + H2O + H(+) = dUTP + NH4(+). It functions in the pathway pyrimidine metabolism; dUMP biosynthesis; dUMP from dCTP (dUTP route): step 1/2. Functionally, catalyzes the deamination of dCTP to dUTP. This Protochlamydia amoebophila (strain UWE25) protein is dCTP deaminase.